The chain runs to 103 residues: CLAVATA3/ESR (CLE)-related protein 16 (103 aa).

The N-terminal stretch at 1 to 21 is a signal peptide; it reads MEACSRKRRRRRAYTTSTTGY. The tract at residues 71–103 is disordered; that stretch reads VSFTGQRREEENRDEVYKDDKRLVHTGPNPLHN. Basic and acidic residues predominate over residues 76-93; that stretch reads QRREEENRDEVYKDDKRL. Pro-98 carries the post-translational modification Hydroxyproline. Pro-98 carries O-linked (Ara...) hydroxyproline glycosylation.

Belongs to the CLV3/ESR signal peptide family. The O-glycosylation (arabinosylation) of the hydroxyproline Pro-98 enhances binding affinity of the CLE16p peptide for its receptor. In terms of tissue distribution, expressed in roots, stems, apex, seedlings, leaves, flowers and siliques.

The protein localises to the secreted. It is found in the extracellular space. In terms of biological role, extracellular signal peptide that regulates cell fate. Represses root apical meristem maintenance. Regulates the transition of protophloem cells from proliferation to differentiation, thus impinging on postembryonic growth capacity of the root meristem; this signaling pathway requires CRN and CLV2. The protein is CLAVATA3/ESR (CLE)-related protein 16 of Arabidopsis thaliana (Mouse-ear cress).